The primary structure comprises 354 residues: MNEAIIQLDHIDITFRQKKRVIEAVKDVTVHINQGDIYGIVGYSGAGKSTLVRVINLLQAPTNGKITVDGDVTFDQGKIQLSADALRQKRRDIGMIFQHFNLMAQKTAKENVAFALRHSSLSKTEKEHKVIELLELVGLSERADNYPAQLSGGQKQRVAIARALANDPKILISDEATSALDPKTTKQILALLQELNCKLGLTIVMITHEMQIVKDICNRVAVMQNGVLIEEGSVLDIFSNPKEALTQEFITTATGIDEALEKINQQDIVKHLPANALLAQLKYAGTSTDEPLLNSIYRQFEVTANILYGNIEILDHIPVGDMIVVLEGQAENILAAEKALHEAGVDVSILKRGA.

The ABC transporter domain maps to Leu8–Ile250. Position 42-49 (Gly42–Ser49) interacts with ATP.

The protein belongs to the ABC transporter superfamily. Methionine importer (TC 3.A.1.24) family. The complex is composed of two ATP-binding proteins (MetN), two transmembrane proteins (MetI) and a solute-binding protein (MetQ).

It is found in the cell membrane. The catalysed reaction is L-methionine(out) + ATP + H2O = L-methionine(in) + ADP + phosphate + H(+). It carries out the reaction D-methionine(out) + ATP + H2O = D-methionine(in) + ADP + phosphate + H(+). Its function is as follows. Part of the ABC transporter complex MetNIQ involved in methionine import. Responsible for energy coupling to the transport system. This chain is Methionine import ATP-binding protein MetN, found in Streptococcus pyogenes serotype M2 (strain MGAS10270).